The following is a 234-amino-acid chain: Transcriptional regulatory protein WalR (234 aa).

The Response regulatory domain maps to 3–116 (KILIVDDEKP…ELQARVKALL (114 aa)). Asp-52 carries the post-translational modification 4-aspartylphosphate. The segment at residues 133–232 (PQPIQIGDLE…RRGVGYYMRN (100 aa)) is a DNA-binding region (ompR/PhoB-type).

Monomer. Homodimer. In terms of processing, phosphorylated by WalK; can also be dephosphorylated by WalK.

The protein localises to the cytoplasm. Member of the two-component regulatory system WalK/WalR that regulates genes involved in cell wall metabolism. Binds to the promoter region of the transcription factor fabT gene in the fabTH-acp operon in vitro. Inhibits transcription of fabT, probably acting in an unphosphorylated form, thereby playing a role in the regulation of fatty acid biosynthesis. Essential for normal growth in vitro. Required for maintaining normal cellular morphology, acting, at least in part, by regulating peptidoglycan hydrolase pcsB. Involved in maintaining expression of WalRK regulon genes in exponentially growing cells. This Streptococcus pneumoniae serotype 2 (strain D39 / NCTC 7466) protein is Transcriptional regulatory protein WalR.